The chain runs to 335 residues: 7,8-didemethyl-8-hydroxy-5-deazariboflavin synthase (335 aa).

The region spanning 1-246 (MTYSKNVFIP…QVAPNLIDPK (246 aa)) is the Radical SAM core domain. Residues C15, C19, and C22 each coordinate [4Fe-4S] cluster.

This sequence belongs to the radical SAM superfamily. CofG family. As to quaternary structure, consists of two subunits, CofG and CofH. It depends on [4Fe-4S] cluster as a cofactor.

It carries out the reaction 5-amino-5-(4-hydroxybenzyl)-6-(D-ribitylimino)-5,6-dihydrouracil + S-adenosyl-L-methionine = 7,8-didemethyl-8-hydroxy-5-deazariboflavin + 5'-deoxyadenosine + L-methionine + NH4(+) + H(+). It functions in the pathway cofactor biosynthesis; coenzyme F0 biosynthesis. Its function is as follows. Catalyzes the radical-mediated synthesis of 7,8-didemethyl-8-hydroxy-5-deazariboflavin from 5-amino-5-(4-hydroxybenzyl)-6-(D-ribitylimino)-5,6-dihydrouracil. The protein is 7,8-didemethyl-8-hydroxy-5-deazariboflavin synthase of Methanosarcina mazei (strain ATCC BAA-159 / DSM 3647 / Goe1 / Go1 / JCM 11833 / OCM 88) (Methanosarcina frisia).